Here is a 98-residue protein sequence, read N- to C-terminus: Plastocyanin (98 aa).

In terms of domain architecture, Plastocyanin-like spans 1–98 (AQIVKLGGDD…AGMKMTITVQ (98 aa)). 4 residues coordinate Cu cation: histidine 38, cysteine 83, histidine 86, and methionine 91.

It belongs to the plastocyanin family. Requires Cu(2+) as cofactor.

It is found in the plastid. Its subcellular location is the chloroplast thylakoid membrane. Its function is as follows. Participates in electron transfer between P700 and the cytochrome b6-f complex in photosystem I. In Ulva arasakii (Sea lettuce), this protein is Plastocyanin (PETE).